Here is a 185-residue protein sequence, read N- to C-terminus: Ribosome-recycling factor (185 aa).

Belongs to the RRF family.

The protein localises to the cytoplasm. Responsible for the release of ribosomes from messenger RNA at the termination of protein biosynthesis. May increase the efficiency of translation by recycling ribosomes from one round of translation to another. The sequence is that of Ribosome-recycling factor from Pseudoalteromonas atlantica (strain T6c / ATCC BAA-1087).